The sequence spans 694 residues: MITVAPFVSLRFQFPLYIINRSTLFFRERTQYLVYNTCHILRTTAKTMPVVAEYAKSNRSSCRSCSNKIAVKSLRLGLISKGRGGVDMTRWHHFDCFPTDSESIASVDDIQGLSALEKEDQDALTKLVEQCGKVPAKKPDEKKGKAKKHIMGPKGLTKAATSSKVIADNAKSSRSSCNRCSQTIVSKDLRVGLVTEDSRGFDITRWHHLGCFPIDFHPIDSVEDIGGYSSLEKGDQMELKYLAEVNKKDKTLIDDVQKMDEGDDEAIADNELTEETKKGKHSPVAKLVEQPGEPAKEDEDEESKKPASDEISEQKTKDVKNSPDSSKVISEYAKSSRSTCKKCSQTIAAKELRLGLVTRNFRGFDMKQWHHLGCFPVDSDPIVSVEDIGGFSELQSGDQDALKELVQQCGKQTLVDKMDEDNDDTEAKIKLTEETNKRKHSEVGEMVEEDESLTKAKQQMAKTHKVNMSESTSQVEVEAEITLSASDVKDKYRDANLLPKWKAFETVIFLERDDGLNDSEKIAAFDFDGCLAKTSVKIVGADAWSLMYPSIPEKLQSLHDQGYKLVIFTNESNIDRWKNKRQAAVDSKIGRLNSFIERVKVPIQVFIACGVSSSGGKGGKDDLYRKPKAGMWQLMKKHFNSGIAIDMDKSFYVGDAAGRKMDHSDADIKFAQASGLKFFTPEEYFIPSSTSPGT.

PARP-type zinc fingers lie at residues 50–132 and 165–247; these read VVAE…EQCG and VIAD…EVNK. Residues cysteine 62, cysteine 65, histidine 93, cysteine 96, cysteine 177, cysteine 180, histidine 208, and cysteine 211 each coordinate Zn(2+). A disordered region spans residues 266-331; sequence AIADNELTEE…SPDSSKVISE (66 aa). The segment covering 302-321 has biased composition (basic and acidic residues); sequence ESKKPASDEISEQKTKDVKN. A compositionally biased stretch (polar residues) spans 322 to 331; the sequence is SPDSSKVISE. A PARP-type 3 zinc finger spans residues 328-410; that stretch reads VISEYAKSSR…ALKELVQQCG (83 aa). The Zn(2+) site is built by cysteine 340, cysteine 343, histidine 371, and cysteine 374.

It in the C-terminal section; belongs to the DNA 3' phosphatase family. As to quaternary structure, interacts with ROS1 (via the central region). Binds to XRCC1.

The protein localises to the nucleus. The protein resides in the nucleoplasm. It carries out the reaction a 3'end (2'-deoxyribonucleotide 3'-phosphate)-DNA + H2O = a 3'-end 2'-deoxyribonucleotide-DNA + phosphate. Its activity is regulated as follows. Activated by the presence of DNA. Stimulated by XRCC1. Nick-sensing 3'-phosphoesterase involved in a base excision repair pathway required for active DNA demethylation. The N-terminal DNA-binding domain binds specifically to gap sites and sharply bends the target DNA. Lacks 5'-kinase activity but is capable of 3'-phosphoglycolate end processing. Inactive on 3'-alpha,beta-unsaturated aldehyde (3'-dRP). Protects partially genes from transcriptional silencing by preventing promoter DNA hypermethylation. The chain is Polynucleotide 3'-phosphatase ZDP (ZDP) from Arabidopsis thaliana (Mouse-ear cress).